The sequence spans 144 residues: Phospholipase A2, membrane associated (144 aa).

The first 20 residues, M1–G20, serve as a signal peptide directing secretion. 7 disulfide bridges follow: C46/C137, C48/C64, C63/C117, C69/C144, C70/C110, C79/C103, and C97/C108. H47, G49, and G51 together coordinate Ca(2+). H67 is an active-site residue. D68 serves as a coordination point for Ca(2+). Residue D111 is part of the active site.

Belongs to the phospholipase A2 family. The cofactor is Ca(2+). In terms of tissue distribution, expressed in various tissues including heart, kidney, liver, lung, pancreas, placenta, skeletal muscle, prostate, ovary, colon and small intestine. Not detected in lymphoid organs and brain. Expressed in platelets (at protein level).

It is found in the secreted. The protein localises to the cell membrane. Its subcellular location is the mitochondrion outer membrane. It catalyses the reaction a 1,2-diacyl-sn-glycero-3-phosphoethanolamine + H2O = a 1-acyl-sn-glycero-3-phosphoethanolamine + a fatty acid + H(+). The enzyme catalyses 1-hexadecanoyl-2-(9Z-octadecenoyl)-sn-glycero-3-phosphoethanolamine + H2O = 1-hexadecanoyl-sn-glycero-3-phosphoethanolamine + (9Z)-octadecenoate + H(+). The catalysed reaction is 1-hexadecanoyl-2-(9Z,12Z-octadecadienoyl)-sn-glycero-3-phosphoethanolamine + H2O = 1-hexadecanoyl-sn-glycero-3-phosphoethanolamine + (9Z,12Z)-octadecadienoate + H(+). It carries out the reaction 1-hexadecanoyl-2-(5Z,8Z,11Z,14Z-eicosatetraenoyl)-sn-glycero-3-phosphoethanolamine + H2O = 1-hexadecanoyl-sn-glycero-3-phosphoethanolamine + (5Z,8Z,11Z,14Z)-eicosatetraenoate + H(+). It catalyses the reaction N-hexadecanoyl-1,2-di-(9Z-octadecenoyl)-sn-glycero-3-phosphoethanolamine + H2O = N-hexadecanoyl-1-(9Z-octadecenoyl)-sn-glycero-3-phosphoethanolamine + (9Z)-octadecenoate + H(+). The enzyme catalyses 1,2-dihexadecanoyl-sn-glycero-3-phospho-(1'-sn-glycerol) + H2O = 1-hexadecanoyl-sn-glycero-3-phospho-(1'-sn-glycerol) + hexadecanoate + H(+). The catalysed reaction is 1-hexadecanoyl-2-(9Z-octadecenoyl)-sn-glycero-3-phosphoglycerol + H2O = 1-hexadecanoyl-sn-glycero-3-phosphoglycerol + (9Z)-octadecenoate + H(+). It carries out the reaction 1-hexadecanoyl-2-(9Z-octadecenoyl)-sn-glycero-3-phospho-(1'-sn-glycerol) + H2O = 1-hexadecanoyl-sn-glycero-3-phospho-(1'-sn-glycerol) + (9Z)-octadecenoate + H(+). It catalyses the reaction a 1,2-diacyl-sn-glycero-3-phosphocholine + H2O = a 1-acyl-sn-glycero-3-phosphocholine + a fatty acid + H(+). The enzyme catalyses 1,2-dihexadecanoyl-sn-glycero-3-phosphocholine + H2O = 1-hexadecanoyl-sn-glycero-3-phosphocholine + hexadecanoate + H(+). The catalysed reaction is 1-hexadecanoyl-2-(9Z-octadecenoyl)-sn-glycero-3-phosphocholine + H2O = 1-hexadecanoyl-sn-glycero-3-phosphocholine + (9Z)-octadecenoate + H(+). It carries out the reaction 1-hexadecanoyl-2-(9Z,12Z-octadecadienoyl)-sn-glycero-3-phosphocholine + H2O = (9Z,12Z)-octadecadienoate + 1-hexadecanoyl-sn-glycero-3-phosphocholine + H(+). It catalyses the reaction 1-hexadecanoyl-2-(4Z,7Z,10Z,13Z,16Z,19Z-docosahexaenoyl)-sn-glycero-3-phosphocholine + H2O = (4Z,7Z,10Z,13Z,16Z,19Z)-docosahexaenoate + 1-hexadecanoyl-sn-glycero-3-phosphocholine + H(+). Its function is as follows. Secretory calcium-dependent phospholipase A2 that primarily targets extracellular phospholipids with implications in host antimicrobial defense, inflammatory response and tissue regeneration. Hydrolyzes the ester bond of the fatty acyl group attached at sn-2 position of phospholipids (phospholipase A2 activity) with preference for phosphatidylethanolamines and phosphatidylglycerols over phosphatidylcholines. Contributes to lipid remodeling of cellular membranes and generation of lipid mediators involved in pathogen clearance. Displays bactericidal activity against Gram-positive bacteria by directly hydrolyzing phospholipids of the bacterial membrane. Upon sterile inflammation, targets membrane phospholipids of extracellular mitochondria released from activated platelets, generating free unsaturated fatty acids such as arachidonate that is used by neighboring leukocytes to synthesize inflammatory eicosanoids such as leukotrienes. Simultaneously, by compromising mitochondrial membrane integrity, promotes the release in circulation of potent damage-associated molecular pattern molecules that activate the innate immune response. Plays a stem cell regulator role in the intestinal crypt. Within intracellular compartment mediates Paneth cell differentiation and its stem cell supporting functions by inhibiting Wnt signaling pathway in intestinal stem cell (ICS). Secreted in the intestinal lumen upon inflammation, acts in an autocrine way and promotes prostaglandin E2 synthesis that stimulates Wnt signaling pathway in ICS cells and tissue regeneration. May play a role in the biosynthesis of N-acyl ethanolamines that regulate energy metabolism and inflammation. Hydrolyzes N-acyl phosphatidylethanolamines to N-acyl lysophosphatidylethanolamines, which are further cleaved by a lysophospholipase D to release N-acyl ethanolamines. Independent of its catalytic activity, acts as a ligand for integrins. Binds to and activates integrins ITGAV:ITGB3, ITGA4:ITGB1 and ITGA5:ITGB1. Binds to a site (site 2) which is distinct from the classical ligand-binding site (site 1) and induces integrin conformational changes and enhanced ligand binding to site 1. Induces cell proliferation in an integrin-dependent manner. The sequence is that of Phospholipase A2, membrane associated (PLA2G2A) from Homo sapiens (Human).